Reading from the N-terminus, the 182-residue chain is Bifunctional protein PyrR (182 aa).

Positions 97–109 (VVLVDDVIFRGRT) match the PRPP-binding motif.

Belongs to the purine/pyrimidine phosphoribosyltransferase family. PyrR subfamily.

The enzyme catalyses UMP + diphosphate = 5-phospho-alpha-D-ribose 1-diphosphate + uracil. Functionally, regulates the transcription of the pyrimidine nucleotide (pyr) operon in response to exogenous pyrimidines. In terms of biological role, also displays a weak uracil phosphoribosyltransferase activity which is not physiologically significant. This chain is Bifunctional protein PyrR, found in Synechococcus sp. (strain JA-2-3B'a(2-13)) (Cyanobacteria bacterium Yellowstone B-Prime).